Here is a 211-residue protein sequence, read N- to C-terminus: LexA repressor (211 aa).

Residues Arg30–Lys50 constitute a DNA-binding region (H-T-H motif). Residues Ser128 and Lys165 each act as for autocatalytic cleavage activity in the active site.

It belongs to the peptidase S24 family. In terms of assembly, homodimer.

The catalysed reaction is Hydrolysis of Ala-|-Gly bond in repressor LexA.. In terms of biological role, represses a number of genes involved in the response to DNA damage (SOS response), including recA and lexA. In the presence of single-stranded DNA, RecA interacts with LexA causing an autocatalytic cleavage which disrupts the DNA-binding part of LexA, leading to derepression of the SOS regulon and eventually DNA repair. This Haemophilus ducreyi (strain 35000HP / ATCC 700724) protein is LexA repressor.